Consider the following 596-residue polypeptide: Interleukin-1 receptor-associated kinase 3 (596 aa).

Positions 41-106 (WRGLAERLSS…RAIHLITNYG (66 aa)) constitute a Death domain. Phosphoserine; by IRAK1 is present on Ser-110. The Protein kinase domain occupies 165–452 (FHKDFLIGEG…LESTQASLYF (288 aa)). ATP contacts are provided by residues 171–179 (IGEGEIFEV), Lys-192, 295–298 (SSAN), and Asp-311. Residue Ser-467 is modified to Phosphoserine. Residues 560–596 (NIDPSSEAPGHSCRSRPVESSCSSKFSWDEYEQYKKE) form a disordered region.

This sequence belongs to the protein kinase superfamily. TKL Ser/Thr protein kinase family. Pelle subfamily. As to quaternary structure, monomer. Homodimer; disulfide-linked. May interact with IRAK4 (when phosphorylated). Interacts (when phosphorylated at Ser-110) with PIN1 (via WW domain) in response to IL33-mediated (but not TLR4 ligand LPS) dendritic cell stimulation. In terms of tissue distribution, expressed in eosinophils, dendritic cells and/or monocytes (at protein level). Expressed predominantly in peripheral blood lymphocytes.

The protein resides in the cytoplasm. It is found in the nucleus. Its function is as follows. Putative inactive protein kinase which regulates signaling downstream of immune receptors including IL1R and Toll-like receptors. Inhibits dissociation of IRAK1 and IRAK4 from the Toll-like receptor signaling complex by either inhibiting the phosphorylation of IRAK1 and IRAK4 or stabilizing the receptor complex. Upon IL33-induced lung inflammation, positively regulates expression of IL6, CSF3, CXCL2 and CCL5 mRNAs in dendritic cells. The protein is Interleukin-1 receptor-associated kinase 3 of Homo sapiens (Human).